Consider the following 150-residue polypeptide: MFCPFCHHPQSRVIDSRTVENGFVTRRRRQCTKCHGRFTTVEKSVLLVEKRNGVTEDFSKDKLIRGVRRACQGRNVSDDALKLLAQEVEIDLRAQGGSRVNSNDVGLAVLEPLRKLDEVAYMRFASVYKSFSSMEDFEREITEFKARRSQ.

The segment at 3–34 (CPFCHHPQSRVIDSRTVENGFVTRRRRQCTKC) is a zinc-finger region. The region spanning 46-136 (LLVEKRNGVT…VYKSFSSMED (91 aa)) is the ATP-cone domain.

The protein belongs to the NrdR family. The cofactor is Zn(2+).

Its function is as follows. Negatively regulates transcription of bacterial ribonucleotide reductase nrd genes and operons by binding to NrdR-boxes. This chain is Transcriptional repressor NrdR, found in Corynebacterium kroppenstedtii (strain DSM 44385 / JCM 11950 / CIP 105744 / CCUG 35717).